A 38-amino-acid polypeptide reads, in one-letter code: Large ribosomal subunit protein bL12 (38 aa).

The protein belongs to the bacterial ribosomal protein bL12 family. Homodimer. Part of the ribosomal stalk of the 50S ribosomal subunit. Forms a multimeric L10(L12)X complex, where L10 forms an elongated spine to which 2 to 4 L12 dimers bind in a sequential fashion. Binds GTP-bound translation factors.

In terms of biological role, forms part of the ribosomal stalk which helps the ribosome interact with GTP-bound translation factors. Is thus essential for accurate translation. The sequence is that of Large ribosomal subunit protein bL12 (rplL) from Salinivibrio costicola (Vibrio costicola).